The primary structure comprises 181 residues: ATP-dependent protease subunit HslV (181 aa).

T9 is an active-site residue. Na(+) is bound by residues A166, C169, and T172.

Belongs to the peptidase T1B family. HslV subfamily. In terms of assembly, a double ring-shaped homohexamer of HslV is capped on each side by a ring-shaped HslU homohexamer. The assembly of the HslU/HslV complex is dependent on binding of ATP.

It is found in the cytoplasm. The catalysed reaction is ATP-dependent cleavage of peptide bonds with broad specificity.. With respect to regulation, allosterically activated by HslU binding. Functionally, protease subunit of a proteasome-like degradation complex believed to be a general protein degrading machinery. This Staphylococcus aureus (strain bovine RF122 / ET3-1) protein is ATP-dependent protease subunit HslV.